Here is a 254-residue protein sequence, read N- to C-terminus: Leucyl/phenylalanyl-tRNA--protein transferase (254 aa).

This sequence belongs to the L/F-transferase family.

The protein resides in the cytoplasm. The enzyme catalyses N-terminal L-lysyl-[protein] + L-leucyl-tRNA(Leu) = N-terminal L-leucyl-L-lysyl-[protein] + tRNA(Leu) + H(+). It carries out the reaction N-terminal L-arginyl-[protein] + L-leucyl-tRNA(Leu) = N-terminal L-leucyl-L-arginyl-[protein] + tRNA(Leu) + H(+). It catalyses the reaction L-phenylalanyl-tRNA(Phe) + an N-terminal L-alpha-aminoacyl-[protein] = an N-terminal L-phenylalanyl-L-alpha-aminoacyl-[protein] + tRNA(Phe). Functionally, functions in the N-end rule pathway of protein degradation where it conjugates Leu, Phe and, less efficiently, Met from aminoacyl-tRNAs to the N-termini of proteins containing an N-terminal arginine or lysine. This is Leucyl/phenylalanyl-tRNA--protein transferase from Burkholderia ambifaria (strain MC40-6).